The following is a 352-amino-acid chain: Ion-translocating oxidoreductase complex subunit D (352 aa).

4 consecutive transmembrane segments (helical) span residues 20-40 (IMLL…WFFG), 42-62 (GTLV…ALVL), 89-109 (IPPL…VIIA), and 123-143 (PAMI…TSWL). T187 carries the FMN phosphoryl threonine modification. 5 helical membrane-spanning segments follow: residues 214–234 (ILAG…GLWL), 242–262 (WHIP…GWLF), 267–287 (LAAP…FFIL), 301–321 (LIFG…GGYP), and 322–342 (DGVA…DYYT).

The protein belongs to the NqrB/RnfD family. As to quaternary structure, the complex is composed of six subunits: RsxA, RsxB, RsxC, RsxD, RsxE and RsxG. FMN is required as a cofactor.

It is found in the cell inner membrane. In terms of biological role, part of a membrane-bound complex that couples electron transfer with translocation of ions across the membrane. Required to maintain the reduced state of SoxR. This is Ion-translocating oxidoreductase complex subunit D from Shigella sonnei (strain Ss046).